A 132-amino-acid chain; its full sequence is Ribosome-binding factor A (132 aa).

This sequence belongs to the RbfA family. As to quaternary structure, monomer. Binds 30S ribosomal subunits, but not 50S ribosomal subunits or 70S ribosomes.

The protein localises to the cytoplasm. Functionally, one of several proteins that assist in the late maturation steps of the functional core of the 30S ribosomal subunit. Associates with free 30S ribosomal subunits (but not with 30S subunits that are part of 70S ribosomes or polysomes). Required for efficient processing of 16S rRNA. May interact with the 5'-terminal helix region of 16S rRNA. This chain is Ribosome-binding factor A, found in Burkholderia cenocepacia (strain ATCC BAA-245 / DSM 16553 / LMG 16656 / NCTC 13227 / J2315 / CF5610) (Burkholderia cepacia (strain J2315)).